Consider the following 290-residue polypeptide: Ribosomal protein L11 methyltransferase (290 aa).

S-adenosyl-L-methionine contacts are provided by T135, G158, D180, and N227.

Belongs to the methyltransferase superfamily. PrmA family.

The protein resides in the cytoplasm. The catalysed reaction is L-lysyl-[protein] + 3 S-adenosyl-L-methionine = N(6),N(6),N(6)-trimethyl-L-lysyl-[protein] + 3 S-adenosyl-L-homocysteine + 3 H(+). Methylates ribosomal protein L11. The protein is Ribosomal protein L11 methyltransferase of Chelativorans sp. (strain BNC1).